We begin with the raw amino-acid sequence, 235 residues long: Phosphoribosylaminoimidazole-succinocarboxamide synthase (235 aa).

This sequence belongs to the SAICAR synthetase family.

The enzyme catalyses 5-amino-1-(5-phospho-D-ribosyl)imidazole-4-carboxylate + L-aspartate + ATP = (2S)-2-[5-amino-1-(5-phospho-beta-D-ribosyl)imidazole-4-carboxamido]succinate + ADP + phosphate + 2 H(+). The protein operates within purine metabolism; IMP biosynthesis via de novo pathway; 5-amino-1-(5-phospho-D-ribosyl)imidazole-4-carboxamide from 5-amino-1-(5-phospho-D-ribosyl)imidazole-4-carboxylate: step 1/2. The chain is Phosphoribosylaminoimidazole-succinocarboxamide synthase from Clostridium botulinum (strain Alaska E43 / Type E3).